Here is a 50-residue protein sequence, read N- to C-terminus: Ribosome-inactivating protein lyophyllin (50 aa).

The catalysed reaction is Endohydrolysis of the N-glycosidic bond at one specific adenosine on the 28S rRNA.. N-glycosylase that inhibits protein synthesis by depurinating ribosomal rRNA, and thus acts as a ribosomal inactivating protein (RIP). Has adenine polynucleotide glycosidase activity on the poly(A) substrate A30-ssDNA. Inhibits cell-free translation in rabbit reticulocyte lysate system with an IC(50) of 1 nM. May function in the defense response to pathogens. Displays antifungal activity against C.comatus and P.piricola, but not against R.solani, M.arachidicola and C.gossypii. Inhibits mycelial growth in P.piricola with an IC(50) of 2.5 uM. Has cytotoxic activity against the human cancer cell lines Hela, HepG2, and JAR, with IC(50) of 358.8, 489.8, and 926.9 nM respectively. It also inhibits HIV-1 reverse transcriptase activity (IC(50)=7.9 nM) and disrupts mouse embryonic development. This chain is Ribosome-inactivating protein lyophyllin, found in Lyophyllum shimeji (Hon-shimeji).